A 126-amino-acid chain; its full sequence is Spermidine export protein MdtJ (126 aa).

4 consecutive transmembrane segments (helical) span residues 1–21 (MIYWIFLALAITAEVIGTLSM), 30–50 (ITGHIVMYIMITASYILLSLA), 54–74 (VALGVAYALWEGIGILFITLF), and 81–101 (EPFSLTKLAGLAILVIGIVML).

The protein belongs to the drug/metabolite transporter (DMT) superfamily. Small multidrug resistance (SMR) (TC 2.A.7.1) family. MdtJ subfamily. In terms of assembly, forms a complex with MdtI.

It is found in the cell inner membrane. Its function is as follows. Catalyzes the excretion of spermidine. The polypeptide is Spermidine export protein MdtJ (Sodalis glossinidius (strain morsitans)).